A 354-amino-acid chain; its full sequence is Serum paraoxonase/lactonase 3 (354 aa).

A disulfide bridge links C42 with C352. Residue N50 is glycosylated (N-linked (GlcNAc...) asparagine). E53 and D54 together coordinate Ca(2+). H114 functions as the Proton acceptor in the catalytic mechanism. A Ca(2+)-binding site is contributed by I116. At S165 the chain carries Phosphoserine. 5 residues coordinate Ca(2+): N167, D168, N223, D268, and N269. N-linked (GlcNAc...) asparagine glycosylation is found at N269 and N323.

The protein belongs to the paraoxonase family. In terms of assembly, homodimer. Requires Ca(2+) as cofactor. Glycosylated. In terms of processing, the signal sequence is not cleaved.

Its subcellular location is the secreted. It is found in the extracellular space. It catalyses the reaction a phenyl acetate + H2O = a phenol + acetate + H(+). The catalysed reaction is An aryl dialkyl phosphate + H2O = dialkyl phosphate + an aryl alcohol.. The enzyme catalyses an N-acyl-L-homoserine lactone + H2O = an N-acyl-L-homoserine + H(+). In terms of biological role, has low activity towards the organophosphate paraxon and aromatic carboxylic acid esters. Rapidly hydrolyzes lactones such as statin prodrugs (e.g. lovastatin). Hydrolyzes aromatic lactones and 5- or 6-member ring lactones with aliphatic substituents but not simple lactones or those with polar substituents. This Rattus norvegicus (Rat) protein is Serum paraoxonase/lactonase 3 (Pon3).